A 100-amino-acid chain; its full sequence is Sec-independent protein translocase protein TatA (100 aa).

A helical membrane pass occupies residues 1 to 21 (MGALKPWHIAVLVVVLILLFG). Over residues 44–55 (KSLHDDDRDLAE) the composition is skewed to basic and acidic residues. A disordered region spans residues 44 to 100 (KSLHDDDRDLAEKANAQAGYQPLPPQVQQEPYPQQTPYQAPPQQQPVVDPVQRARDS). Residues 69–81 (QVQQEPYPQQTPY) show a composition bias toward low complexity.

The protein belongs to the TatA/E family. The Tat system comprises two distinct complexes: a TatABC complex, containing multiple copies of TatA, TatB and TatC subunits, and a separate TatA complex, containing only TatA subunits. Substrates initially bind to the TatABC complex, which probably triggers association of the separate TatA complex to form the active translocon.

It is found in the cell membrane. In terms of biological role, part of the twin-arginine translocation (Tat) system that transports large folded proteins containing a characteristic twin-arginine motif in their signal peptide across membranes. TatA could form the protein-conducting channel of the Tat system. The protein is Sec-independent protein translocase protein TatA of Salinispora arenicola (strain CNS-205).